Reading from the N-terminus, the 280-residue chain is Myelin proteolipid protein B (280 aa).

Over 1-10 (MGWHDGCIRC) the chain is Cytoplasmic. S-palmitoyl cysteine attachment occurs at residues Cys7 and Cys10. A helical transmembrane segment spans residues 11–36 (MVGVPFASVIATVLCFAGVALFCGCG). The Extracellular portion of the chain corresponds to 37–59 (HEALSGTEKLIETYFSKNYQEYE). A helical membrane pass occupies residues 60-88 (YLIHVINAFQYVIYGIAIFFFLYGILLLA). Over 89-152 (EGFYTTTAIK…LGKWLGHPDK (64 aa)) the chain is Cytoplasmic. Residues Cys140 and Cys142 are each lipidated (S-palmitoyl cysteine). The helical transmembrane segment at 153-179 (FVGVTYVITILWILIFACSAVPVYIYF) threads the bilayer. The Extracellular segment spans residues 180–239 (NTWVTCQSIAFPGKTTTSVSTLCLDARMYGVLPWNAFPGKVCGTSLLAICKTSEFQMTFH). 2 disulfide bridges follow: Cys185–Cys229 and Cys202–Cys221. Residues 240–269 (LFIAAFVGAAATLVALLTYMVGASFNYAVL) traverse the membrane as a helical segment. Residues 270-280 (RVTGRSDRSKF) are Cytoplasmic-facing.

Belongs to the myelin proteolipid protein family.

Its subcellular location is the cell membrane. In terms of biological role, this is the major myelin protein from the central nervous system. It plays an important role in the formation or maintenance of the multilamellar structure of myelin. The chain is Myelin proteolipid protein B (plp1-b) from Xenopus laevis (African clawed frog).